We begin with the raw amino-acid sequence, 200 residues long: Small ribosomal subunit protein uS4 (200 aa).

The segment at 20 to 41 (SGTGKELEKRPYAPGQHGPNQR) is disordered. The S4 RNA-binding domain occupies 92 to 155 (ARLDAVVYSL…LKLDIIAESV (64 aa)).

The protein belongs to the universal ribosomal protein uS4 family. Part of the 30S ribosomal subunit. Contacts protein S5. The interaction surface between S4 and S5 is involved in control of translational fidelity.

Functionally, one of the primary rRNA binding proteins, it binds directly to 16S rRNA where it nucleates assembly of the body of the 30S subunit. In terms of biological role, with S5 and S12 plays an important role in translational accuracy. The sequence is that of Small ribosomal subunit protein uS4 from Staphylococcus saprophyticus subsp. saprophyticus (strain ATCC 15305 / DSM 20229 / NCIMB 8711 / NCTC 7292 / S-41).